The primary structure comprises 477 residues: Glycogen synthase (477 aa).

K15 is an ADP-alpha-D-glucose binding site.

It belongs to the glycosyltransferase 1 family. Bacterial/plant glycogen synthase subfamily.

It catalyses the reaction [(1-&gt;4)-alpha-D-glucosyl](n) + ADP-alpha-D-glucose = [(1-&gt;4)-alpha-D-glucosyl](n+1) + ADP + H(+). Its pathway is glycan biosynthesis; glycogen biosynthesis. Functionally, synthesizes alpha-1,4-glucan chains using ADP-glucose. This Shigella boydii serotype 18 (strain CDC 3083-94 / BS512) protein is Glycogen synthase.